Here is a 380-residue protein sequence, read N- to C-terminus: Kappa-type opioid receptor (380 aa).

Residues 1 to 57 (MGRRRQGPAQPASELPARNACLLPNGSAWLPGWAEPDGNGSAGPQDEQLEPAHISPA) lie on the Extracellular side of the membrane. N-linked (GlcNAc...) asparagine glycosylation is found at Asn-25 and Asn-39. A helical membrane pass occupies residues 58 to 85 (IPVIITAVYSVVFVVGLVGNSLVMFVII). The Cytoplasmic portion of the chain corresponds to 86–95 (RYTKMKTATN). The helical transmembrane segment at 96-119 (IYIFNLALADALVTTTMPFQSTVY) threads the bilayer. Topologically, residues 120 to 132 (LMNSWPFGDVLCK) are extracellular. A disulfide bridge connects residues Cys-131 and Cys-210. A helical transmembrane segment spans residues 133 to 154 (IVISIDYYNMFTSIFTLTMMSV). Topologically, residues 155 to 173 (DRYIAVCHPVKALDFRTPL) are cytoplasmic. The helical transmembrane segment at 174–196 (KAKIINICIWLLSSSVGISAIIL) threads the bilayer. Topologically, residues 197-222 (GGTKVREDVDIIECSLQFPDDDYSWW) are extracellular. A helical transmembrane segment spans residues 223-247 (DLFMKICVFVFAFVIPVLIIIVCYT). Residues 248–274 (LMILRLKSVRLLSGSREKDRNLRRITR) lie on the Cytoplasmic side of the membrane. A helical transmembrane segment spans residues 275–296 (LVLVVVAVFIICWTPIHIFILV). Residues 297 to 311 (EALGSTSHSTAALSS) lie on the Extracellular side of the membrane. The chain crosses the membrane as a helical span at residues 312–333 (YYFCIALGYTNSSLNPILYAFL). The Cytoplasmic segment spans residues 334–380 (DENFKRCFRDFCFPIKMRMERQSTSRVRNTVQDPAYMRNVDGVNKPV). The S-palmitoyl cysteine moiety is linked to residue Cys-345.

Belongs to the G-protein coupled receptor 1 family. As to quaternary structure, interacts with NHERF1. Interacts with GABARAPL1.

Its subcellular location is the cell membrane. In terms of biological role, G-protein coupled opioid receptor that functions as a receptor for endogenous alpha-neoendorphins and dynorphins, but has low affinity for beta-endorphins. Also functions as a receptor for various synthetic opioids and for the psychoactive diterpene salvinorin A. Ligand binding causes a conformation change that triggers signaling via guanine nucleotide-binding proteins (G proteins) and modulates the activity of down-stream effectors, such as adenylate cyclase. Signaling leads to the inhibition of adenylate cyclase activity. Inhibits neurotransmitter release by reducing calcium ion currents and increasing potassium ion conductance. Plays a role in the perception of pain. Plays a role in mediating reduced physical activity upon treatment with synthetic opioids. Plays a role in the regulation of salivation in response to synthetic opioids. May play a role in arousal and regulation of autonomic and neuroendocrine functions. The chain is Kappa-type opioid receptor (OPRK1) from Cavia porcellus (Guinea pig).